A 221-amino-acid polypeptide reads, in one-letter code: Putative N-acetylmannosamine-6-phosphate 2-epimerase (221 aa).

It belongs to the NanE family.

The enzyme catalyses an N-acyl-D-glucosamine 6-phosphate = an N-acyl-D-mannosamine 6-phosphate. It participates in amino-sugar metabolism; N-acetylneuraminate degradation; D-fructose 6-phosphate from N-acetylneuraminate: step 3/5. Its function is as follows. Converts N-acetylmannosamine-6-phosphate (ManNAc-6-P) to N-acetylglucosamine-6-phosphate (GlcNAc-6-P). The protein is Putative N-acetylmannosamine-6-phosphate 2-epimerase of Clostridium perfringens (strain ATCC 13124 / DSM 756 / JCM 1290 / NCIMB 6125 / NCTC 8237 / Type A).